The primary structure comprises 112 residues: Nitrogen regulatory protein GlnK1 (112 aa).

T29 provides a ligand contact to ADP. Residues T29 and V38 each contribute to the ATP site. 2-oxoglutarate is bound at residue 52–54 (IVD). ADP contacts are provided by residues V64, 88–90 (DGK), and 101–103 (RVR). ATP contacts are provided by residues V64, 86-90 (PGDGK), and 101-103 (RVR).

This sequence belongs to the P(II) protein family. In terms of assembly, homotrimer. Interacts and forms a complex with Amt1.

Its subcellular location is the cytoplasm. With respect to regulation, formation of the GlnK1/Amt1 complex is decreased in the presence of Mg-ATP or 2-oxoglutarate. The presence of both effectors abolishes the formation of the complex. Functionally, involved in the regulation of nitrogen metabolism. Regulates the activity of its targets by protein-protein interaction in response to the nitrogen status of the cell. Regulates the activity of the ammonia channel Amt1 via direct interaction. This Methanocaldococcus jannaschii (strain ATCC 43067 / DSM 2661 / JAL-1 / JCM 10045 / NBRC 100440) (Methanococcus jannaschii) protein is Nitrogen regulatory protein GlnK1.